Here is a 208-residue protein sequence, read N- to C-terminus: Glutathione S-transferase 1 (208 aa).

One can recognise a GST N-terminal domain in the interval 1–80; that stretch reads MDFYYLPGSA…YLVEKYGKTD (80 aa). Glutathione-binding positions include Ser9, 50-52, and 64-66; these read HTI and ESR. The region spanning 86-207 is the GST C-terminal domain; sequence CPKKRAVINQ…AGCLEFKKYF (122 aa).

It belongs to the GST superfamily. Theta family. As to quaternary structure, homodimer.

It catalyses the reaction RX + glutathione = an S-substituted glutathione + a halide anion + H(+). In terms of biological role, conjugation of reduced glutathione to a wide number of exogenous and endogenous hydrophobic electrophiles. The chain is Glutathione S-transferase 1 (Gst1) from Musca domestica (House fly).